Reading from the N-terminus, the 457-residue chain is Chromosomal replication initiator protein DnaA (457 aa).

The domain I, interacts with DnaA modulators stretch occupies residues 1-71 (MSPSIWEKCL…LLKNFCNINT (71 aa)). Residues 71–119 (TTPTLMLKICKPKIIQKKFFNELTLKKNILNSKLTYNVNTKLSNIIYSS) form a domain II region. Residues 120–337 (EINTNYTFQN…GALNKILANS (218 aa)) form a domain III, AAA+ region region. Residues glycine 165, glycine 167, lysine 168, and threonine 169 each contribute to the ATP site. A domain IV, binds dsDNA region spans residues 338–457 (DSKKKIITIN…FLTLLKILSS (120 aa)).

This sequence belongs to the DnaA family. Oligomerizes as a right-handed, spiral filament on DNA at oriC.

It is found in the cytoplasm. Its function is as follows. Plays an essential role in the initiation and regulation of chromosomal replication. ATP-DnaA binds to the origin of replication (oriC) to initiate formation of the DNA replication initiation complex once per cell cycle. Binds the DnaA box (a 9 base pair repeat at the origin) and separates the double-stranded (ds)DNA. Forms a right-handed helical filament on oriC DNA; dsDNA binds to the exterior of the filament while single-stranded (ss)DNA is stabiized in the filament's interior. The ATP-DnaA-oriC complex binds and stabilizes one strand of the AT-rich DNA unwinding element (DUE), permitting loading of DNA polymerase. After initiation quickly degrades to an ADP-DnaA complex that is not apt for DNA replication. Binds acidic phospholipids. This chain is Chromosomal replication initiator protein DnaA, found in Buchnera aphidicola subsp. Baizongia pistaciae (strain Bp).